A 352-amino-acid polypeptide reads, in one-letter code: C-C chemokine receptor type 5 (352 aa).

Residues 1-30 are Extracellular-facing; the sequence is MDYQVSSPTYDIDYYTSEPCQKTNVKQIAA. At Tyr-3 the chain carries Sulfotyrosine. 2 O-linked (GalNAc...) serine glycosylation sites follow: Ser-6 and Ser-7. 3 positions are modified to sulfotyrosine: Tyr-10, Tyr-14, and Tyr-15. Intrachain disulfides connect Cys-20–Cys-269 and Cys-101–Cys-178. The helical transmembrane segment at 31–58 threads the bilayer; it reads RLLPPLYSLVFIFGFVGNMLVILILINC. The Cytoplasmic segment spans residues 59-68; it reads KRLKSMTDIY. Residues 69-89 traverse the membrane as a helical segment; that stretch reads LLNLAISDLFFLLTVPFWAHY. Residues 90–102 are Extracellular-facing; that stretch reads AAAQWDFGNTMCQ. A helical transmembrane segment spans residues 103 to 124; it reads LLTGLYFIGFFSGIFFIILLTI. The Cytoplasmic segment spans residues 125 to 141; sequence DRYLAIVHAVFALKART. A helical membrane pass occupies residues 142–166; that stretch reads VTFGVVTSVITWVVAVFASLPGIIF. Topologically, residues 167 to 198 are extracellular; sequence TRSQKEGLHYTCSSHFPYSQYQFWKNFQTLKI. Residues 199–218 form a helical membrane-spanning segment; the sequence is VILGLVLPLLVMVICYSGIL. Topologically, residues 219–235 are cytoplasmic; the sequence is KTLLRCRNEKKRHRAVR. A helical membrane pass occupies residues 236-260; it reads LIFTIMIVYFLFWAPYNIVLLLNTF. Residues 261–277 are Extracellular-facing; that stretch reads QEFFGLNNCSSSNRLDQ. A helical transmembrane segment spans residues 278-301; sequence AMQVTETLGMTHCCINPIIYAFVG. At 302–352 the chain is on the cytoplasmic side; it reads EKFRNYLLVFFQKHIAKRFCKCCSIFQQEAPERASSVYTRSTGEQEISVGL. S-palmitoyl cysteine attachment occurs at residues Cys-321, Cys-323, and Cys-324. 4 positions are modified to phosphoserine; by BARK1: Ser-336, Ser-337, Ser-342, and Ser-349.

The protein belongs to the G-protein coupled receptor 1 family. As to quaternary structure, interacts with PRAF2. Efficient ligand binding to CCL3/MIP-1alpha and CCL4/MIP-1beta requires sulfation, O-glycosylation and sialic acid modifications. Glycosylation on Ser-6 is required for efficient binding of CCL4. Interacts with GRK2. Interacts with ARRB1 and ARRB2. Interacts with CNIH4. Interacts with S100A4; this interaction stimulates T-lymphocyte chemotaxis. Post-translationally, sulfated on at least 2 of the N-terminal tyrosines. Sulfation is required for efficient binding of the chemokines, CCL3 and CCL4. Palmitoylation in the C-terminal is important for cell surface expression. In terms of processing, phosphorylation on serine residues in the C-terminal is stimulated by binding CC chemokines especially by APO-RANTES. Post-translationally, O-glycosylated, but not N-glycosylated. Ser-6 appears to be the major site even if Ser-7 may be also O-glycosylated. Also sialylated glycans present which contribute to chemokine binding. Thr-16 and Ser-17 may also be glycosylated and, if so, with small moieties such as a T-antigen.

It is found in the cell membrane. Its function is as follows. Receptor for a number of inflammatory CC-chemokines including CCL3/MIP-1-alpha, CCL4/MIP-1-beta and RANTES and subsequently transduces a signal by increasing the intracellular calcium ion level. May play a role in the control of granulocytic lineage proliferation or differentiation. Participates in T-lymphocyte migration to the infection site by acting as a chemotactic receptor. This chain is C-C chemokine receptor type 5 (CCR5), found in Gorilla gorilla gorilla (Western lowland gorilla).